Consider the following 607-residue polypeptide: Glutamyl-tRNA(Gln) amidotransferase subunit E (607 aa).

The tract at residues Gly399–Glu428 is disordered.

The protein belongs to the GatB/GatE family. GatE subfamily. As to quaternary structure, heterodimer of GatD and GatE.

The catalysed reaction is L-glutamyl-tRNA(Gln) + L-glutamine + ATP + H2O = L-glutaminyl-tRNA(Gln) + L-glutamate + ADP + phosphate + H(+). Allows the formation of correctly charged Gln-tRNA(Gln) through the transamidation of misacylated Glu-tRNA(Gln) in organisms which lack glutaminyl-tRNA synthetase. The reaction takes place in the presence of glutamine and ATP through an activated gamma-phospho-Glu-tRNA(Gln). The GatDE system is specific for glutamate and does not act on aspartate. The protein is Glutamyl-tRNA(Gln) amidotransferase subunit E of Pyrobaculum neutrophilum (strain DSM 2338 / JCM 9278 / NBRC 100436 / V24Sta) (Thermoproteus neutrophilus).